The sequence spans 354 residues: tRNA-specific 2-thiouridylase MnmA (354 aa).

ATP contacts are provided by residues 6-13 (LLSGGVDS) and Leu-33. The active-site Nucleophile is Cys-100. An intrachain disulfide couples Cys-100 to Cys-195. Position 123 (Gly-123) interacts with ATP. An interaction with tRNA region spans residues 145 to 147 (KDQ). Catalysis depends on Cys-195, which acts as the Cysteine persulfide intermediate.

Belongs to the MnmA/TRMU family.

The protein localises to the cytoplasm. It carries out the reaction S-sulfanyl-L-cysteinyl-[protein] + uridine(34) in tRNA + AH2 + ATP = 2-thiouridine(34) in tRNA + L-cysteinyl-[protein] + A + AMP + diphosphate + H(+). Functionally, catalyzes the 2-thiolation of uridine at the wobble position (U34) of tRNA, leading to the formation of s(2)U34. The chain is tRNA-specific 2-thiouridylase MnmA from Borrelia recurrentis (strain A1).